The following is a 1045-amino-acid chain: MILNKRLKLAYCVFLGCYGLSIHSSLAAYQDPGRLGAPDSWKTAEFNRQWGLEAISAEFAYARGYTGKGITIGVIDNAILSHSEFSGKLTRLDNGSYNFSYDKQDNMSFGDHGTHVAGIAAAKRDGAGMHGVAFDADIIGTKLNDYGNRNGREELIQSAARVINNSWGIAPDIRRDAKGDIIWLPNGRPDYVAFVKSEVIAEMMRSKSSVEWGSEQPVPTGGHSAMSTLLRAARHGKLIVFSAGNYNNYNIPEAQKSLPYAFPDVLNNYLIVTNLSDENQLSVSSTSCGQTASYCVSAPGSDIYSTVGRLESNTGGAVNREAYNKGELSLNPGYGNKSGTSMAAPHVTGVAAVLMQRFPYMSADQISAVIKTTATDLGVAGIDNLFGWGRVNLRDAINGPKMFITKEDIPQEYYVPGSYSEKQFVVNIPGLGNIVEPGTPVERRCTSSECSFDSWSNDISGHGGLTKTGAGTLALLGNNTYRGDTWVKQGVLAIDGSVASNVYIENSGTLSGEGTVGAFRAARSGSVAPGNGIGTLHVLHDAIFDRGSQYNVEVADNGRSDKIAARRAFLNGGSVNVSLERSQNLLSQNEAQSLLGNKYTILTTTDGVTGRFENANPSYPFVKVALDYRGNDVGLGITRTDASFDSLASTENEKAVARAVETLNATEPVTETAKRSVAIPAAEEANLLQSDGGEAQAVNEEASIVAGHPIYESFLGFTSARELQQATRQLSGQIHADMASAQINESRYLRDTATERLRQAEGRRTATDIKADDNGAWAKLLGSWGHASGNDNATGYQTSTYGVLLGLDSELFGDGRLGMMTGYTRTSLDGGYQSDAHSDNYHLGLYGDKRFGALALRAGGTYTWHRIDTSRSVNYGAQSDREKAKYNARTGQLFIESGYDWTSDAVNLEPFANLAYTHYRNEEINEQGGAAALRGDKQSQSATASTLGLRADTEWQTDSVAIALRGELGWQHQYGKLERKTQLMFKRTDAAFDVNSVPVSRDGAILKAGVDVSINKNAVLSLGYGGQLSSNHQDNSVNAGLTWRF.

The N-terminal stretch at 1–27 is a signal peptide; the sequence is MILNKRLKLAYCVFLGCYGLSIHSSLA. One can recognise a Peptidase S8 domain in the interval 49 to 397; the sequence is QWGLEAISAE…WGRVNLRDAI (349 aa). Catalysis depends on charge relay system residues Asp76, His112, and Ser341. Positions 646–1045 are cleaved as a propeptide — translocator domain; removed in mature form; that stretch reads SLASTENEKA…SVNAGLTWRF (400 aa). Residues 769 to 1045 enclose the Autotransporter domain; sequence IKADDNGAWA…SVNAGLTWRF (277 aa).

Belongs to the peptidase S8 family.

The protein localises to the secreted. This is Extracellular serine protease from Serratia marcescens.